The sequence spans 343 residues: Stimulator of interferon genes protein homolog (343 aa).

N-linked (GlcNAc...) asparagine glycosylation is present at Asn-84. 2 consecutive transmembrane segments (helical) span residues 87-107 (IYLI…TGNY) and 109-129 (NVMP…WSFT). Asn-157 serves as a coordination point for 3',2'-cGAMP. Asn-187 carries an N-linked (GlcNAc...) asparagine glycan. Residues 195-215 (LVILIPDEMFVNGVLESHLLD) form a helical membrane-spanning segment. Positions 232, 235, 255, 258, and 262 each coordinate 3',2'-cGAMP. Residues Asn-270 and Asn-333 are each glycosylated (N-linked (GlcNAc...) asparagine).

This sequence belongs to the STING family.

Its subcellular location is the endoplasmic reticulum membrane. Functionally, facilitator of innate immune signaling that binds cyclic dinucleotides produced in response to infection by bacteria and/or viruses, and promotes the activation of the NF-kappa-B transcription factor Rel (Relish). Recognizes and binds cyclic di-GMP (c-di-GMP), a cyclic dinucleotide messenger produced by bacteria such as L.monocytogenes, leading to activation of the peptidoglycan recognition protein (IMD) signaling pathway and activation of Rel (Relish). Innate immune response is triggered in response to double-stranded RNA from viruses delivered to the cytoplasm: Sting acts by specifically binding cyclic dinucleotides 3',2'-cGAMP and 2',3'-cGAMP produced by cGlr1 and cGlr2 in response to RNA virus in the cytosol. Has a strong preference for 3',2'-cGAMP compared to other cyclic dinucleotides such as 2',3'-cGAMP or 3'3'-c-di-GMP. Upon binding to 3',2'-cGAMP, activates an antiviral immune response, leading to the activation of Rel (Relish). Activated in brain in response to Zika virus infection, leading to autophagy. In Drosophila melanogaster (Fruit fly), this protein is Stimulator of interferon genes protein homolog.